Here is a 100-residue protein sequence, read N- to C-terminus: Cysteine-rich venom protein VAR1 (100 aa).

The first 22 residues, 1–22 (MILLKLYLTLAAILCQSRGTTS), serve as a signal peptide directing secretion. The SCP domain maps to 41–81 (NKHNDLRRTVDPPAKNMLKMSWDNIIAESAKRAALRCNQNE).

It belongs to the CRISP family. In terms of processing, contains 8 disulfide bonds. Expressed by the venom gland.

It is found in the secreted. Functionally, blocks ryanodine receptors, and potassium channels. The protein is Cysteine-rich venom protein VAR1 of Varanus acanthurus (Ridge-tailed monitor).